The following is a 528-amino-acid chain: Glucose-6-phosphate isomerase (528 aa).

Residue glutamate 322 is the Proton donor of the active site. Catalysis depends on residues histidine 351 and lysine 455.

The protein belongs to the GPI family.

Its subcellular location is the cytoplasm. It catalyses the reaction alpha-D-glucose 6-phosphate = beta-D-fructose 6-phosphate. It functions in the pathway carbohydrate biosynthesis; gluconeogenesis. The protein operates within carbohydrate degradation; glycolysis; D-glyceraldehyde 3-phosphate and glycerone phosphate from D-glucose: step 2/4. Functionally, catalyzes the reversible isomerization of glucose-6-phosphate to fructose-6-phosphate. In Synechococcus elongatus (strain ATCC 33912 / PCC 7942 / FACHB-805) (Anacystis nidulans R2), this protein is Glucose-6-phosphate isomerase.